The primary structure comprises 313 residues: MAITRSSLAICLILSLVTITTADYYSPSSPPVYKSPEHKPTLPSPVYTPPVYKPTLSPPVYTKPTIPPPVYTPPVYKHTPSPPVYTKPTIPPPVYTPPVYKPTLSPPVYTKPTIPPPVYTPPVYKPTPVYTKPTIPPPVYTPPVYKPTPSPPVYKKSPSYSSPPPPYVPKPTYTPTTKPYVPEILKAVDGIILCKNGYETYPILGAKIQIVCSDPASYGKSNTEVVIYSNPTDSKGYFHLSLTSIKDLAYCRVKLYLSPVETCKNPTNVNKGLTGVPLALYGYRFYPDKNLELFSVGPFYYTGPKAAPATPKY.

The first 22 residues, 1 to 22 (MAITRSSLAICLILSLVTITTA), serve as a signal peptide directing secretion. Residues 27–312 (PSSPPVYKSP…GPKAAPATPK (286 aa)) are 35 X 5 AA approximate repeats. 35 consecutive repeat copies span residues 30 to 34 (PPVYK), 35 to 39 (SPEHK), 40 to 43 (PTLP), 44 to 48 (SPVYT), 49 to 53 (PPVYK), 54 to 57 (PTLS), 58 to 62 (PPVYT), 64 to 67 (PTIP), 68 to 72 (PPVYT), 73 to 77 (PPVYK), 82 to 86 (PPVYT), 87 to 91 (KPTIP), 92 to 96 (PPVYT), 97 to 101 (PPVYK), 102 to 105 (PTLS), 106 to 110 (PPVYT), 111 to 115 (KPTIP), 116 to 120 (PPVYT), 121 to 125 (PPVYK), 126 to 131 (PTPVYT), 132 to 136 (KPTIP), 137 to 141 (PPVYT), 142 to 146 (PPVYK), 147 to 150 (PTPS), 151 to 155 (PPVYK), 157 to 163 (SPSYSSP), 164 to 168 (PPPYV), 169 to 174 (PKPTYT), 175 to 181 (PTTKPYV), 182 to 186 (PEILK), 187 to 229 (AVDG…VIYS), 258 to 262 (SPVET), 266 to 270 (PTNVN), 298 to 302 (PFYYT), and 308 to 312 (PATPK).

It belongs to the plant proline-rich protein superfamily. ENOD12 family. In terms of tissue distribution, exclusively expressed in roots, particularly in root hairs-containing regions, and especially in root hairs.

The protein localises to the secreted. Its subcellular location is the cell wall. Functionally, may contribute to cell wall structure in root hairs. This is Proline-rich protein 3 (PRP3) from Arabidopsis thaliana (Mouse-ear cress).